A 443-amino-acid chain; its full sequence is Putative metabolite transport protein YaaU (443 aa).

Residues 1-18 lie on the Cytoplasmic side of the membrane; the sequence is MQPSRNFDDLKFSSIHRR. The chain crosses the membrane as a helical span at residues 19 to 39; that stretch reads ILLWGSGGPFLDGYVLVMIGV. Topologically, residues 40-53 are periplasmic; it reads ALEQLTPALKLDAD. A helical transmembrane segment spans residues 54 to 74; it reads WIGLLGAGTLAGLFVGTSLFG. The Cytoplasmic segment spans residues 75-84; it reads YISDKVGRRK. A helical membrane pass occupies residues 85 to 105; sequence MFLIDIIAIGVISVATMFVSS. Residues 106–113 are Periplasmic-facing; that stretch reads PVELLVMR. The helical transmembrane segment at 114–134 threads the bilayer; that stretch reads VLIGIVIGADYPIATSMITEF. The Cytoplasmic portion of the chain corresponds to 135–145; it reads SSTRQRAFSIS. Residues 146 to 166 form a helical membrane-spanning segment; it reads FIAAMWYVGATCADLVGYWLY. Topologically, residues 167–173 are periplasmic; it reads DVEGGWR. Residues 174–194 form a helical membrane-spanning segment; the sequence is WMLGSAAIPCLLILIGRFELP. The Cytoplasmic portion of the chain corresponds to 195–241; it reads ESPRWLLRKGRVKECEEMMIKLFGEPVAFDEEQPQQTRFRDLFNRRH. Residues 242 to 262 form a helical membrane-spanning segment; it reads FPFVLFVAAIWTCQVIPMFAI. Over 263-282 the chain is Periplasmic; sequence YTFGPQIVGLLGLGVGKNAA. The helical transmembrane segment at 283–303 threads the bilayer; that stretch reads LGNVVISLFFMLGCIPPMLWL. Residues 304-309 are Cytoplasmic-facing; sequence NTAGRR. The helical transmembrane segment at 310-329 threads the bilayer; the sequence is PLLIGSFAMMTLALAVLGLI. The Periplasmic segment spans residues 330 to 334; that stretch reads PDMGI. A helical membrane pass occupies residues 335 to 357; that stretch reads WLVVMAFAVYAFFSGGPGNLQWL. Over 358 to 373 the chain is Cytoplasmic; sequence YPNELFPTDIRASAVG. Residues 374 to 394 form a helical membrane-spanning segment; that stretch reads VIMSLSRIGTIVSTWALPIFI. Over 395–401 the chain is Periplasmic; sequence NNYGISN. Residues 402–422 form a helical membrane-spanning segment; it reads TMLMGAGISLFGLLISVAFAP. The Cytoplasmic portion of the chain corresponds to 423 to 443; it reads ETRGMSLAQTSNMTIRGQRMG.

This sequence belongs to the major facilitator superfamily. Sugar transporter (TC 2.A.1.1) family.

The protein localises to the cell inner membrane. This Escherichia coli (strain K12) protein is Putative metabolite transport protein YaaU (yaaU).